The sequence spans 372 residues: Glutamate 5-kinase (372 aa).

An ATP-binding site is contributed by K14. Substrate contacts are provided by S54, D141, and N153. 173 to 174 lines the ATP pocket; it reads TD. The region spanning 280–358 is the PUA domain; it reads AGRIVLDQGA…TDILSILGFV (79 aa).

It belongs to the glutamate 5-kinase family.

The protein resides in the cytoplasm. The enzyme catalyses L-glutamate + ATP = L-glutamyl 5-phosphate + ADP. The protein operates within amino-acid biosynthesis; L-proline biosynthesis; L-glutamate 5-semialdehyde from L-glutamate: step 1/2. Catalyzes the transfer of a phosphate group to glutamate to form L-glutamate 5-phosphate. The polypeptide is Glutamate 5-kinase (Herminiimonas arsenicoxydans).